A 208-amino-acid chain; its full sequence is Uracil phosphoribosyltransferase (208 aa).

5-phospho-alpha-D-ribose 1-diphosphate contacts are provided by residues R78, R103, and D130–S138. Uracil-binding positions include I193 and G198–A200. D199 serves as a coordination point for 5-phospho-alpha-D-ribose 1-diphosphate.

The protein belongs to the UPRTase family. Mg(2+) serves as cofactor.

The catalysed reaction is UMP + diphosphate = 5-phospho-alpha-D-ribose 1-diphosphate + uracil. It participates in pyrimidine metabolism; UMP biosynthesis via salvage pathway; UMP from uracil: step 1/1. Allosterically activated by GTP. In terms of biological role, catalyzes the conversion of uracil and 5-phospho-alpha-D-ribose 1-diphosphate (PRPP) to UMP and diphosphate. The sequence is that of Uracil phosphoribosyltransferase from Vibrio parahaemolyticus serotype O3:K6 (strain RIMD 2210633).